Consider the following 356-residue polypeptide: Histidinol-phosphate aminotransferase (356 aa).

At lysine 214 the chain carries N6-(pyridoxal phosphate)lysine.

The protein belongs to the class-II pyridoxal-phosphate-dependent aminotransferase family. Histidinol-phosphate aminotransferase subfamily. As to quaternary structure, homodimer. Pyridoxal 5'-phosphate serves as cofactor.

It carries out the reaction L-histidinol phosphate + 2-oxoglutarate = 3-(imidazol-4-yl)-2-oxopropyl phosphate + L-glutamate. It functions in the pathway amino-acid biosynthesis; L-histidine biosynthesis; L-histidine from 5-phospho-alpha-D-ribose 1-diphosphate: step 7/9. This chain is Histidinol-phosphate aminotransferase, found in Shigella dysenteriae serotype 1 (strain Sd197).